The primary structure comprises 178 residues: Protein GrpE (178 aa).

Residues 1 to 11 (MENTQENPTDQ) are compositionally biased toward polar residues. Residues 1-31 (MENTQENPTDQTTEETGREAQAAENAAPAAE) are disordered. Positions 19–31 (EAQAAENAAPAAE) are enriched in low complexity.

Belongs to the GrpE family. Homodimer.

Its subcellular location is the cytoplasm. Functionally, participates actively in the response to hyperosmotic and heat shock by preventing the aggregation of stress-denatured proteins, in association with DnaK and GrpE. It is the nucleotide exchange factor for DnaK and may function as a thermosensor. Unfolded proteins bind initially to DnaJ; upon interaction with the DnaJ-bound protein, DnaK hydrolyzes its bound ATP, resulting in the formation of a stable complex. GrpE releases ADP from DnaK; ATP binding to DnaK triggers the release of the substrate protein, thus completing the reaction cycle. Several rounds of ATP-dependent interactions between DnaJ, DnaK and GrpE are required for fully efficient folding. The protein is Protein GrpE of Burkholderia thailandensis (strain ATCC 700388 / DSM 13276 / CCUG 48851 / CIP 106301 / E264).